The following is a 332-amino-acid chain: Galectin-4 (332 aa).

2 Galectin domains span residues Y19 to I150 and F203 to I332. W265–K271 is an a beta-D-galactoside binding site. Residue S267 is modified to Phosphoserine.

As to quaternary structure, monomer.

In terms of biological role, galectin that binds lactose and a related range of sugars. May be involved in the assembly of adherens junctions. The sequence is that of Galectin-4 (LGALS4) from Bos taurus (Bovine).